Consider the following 308-residue polypeptide: CASP-like protein 4A2 (308 aa).

Positions 1–135 (MALEAQPSPS…APAPAPRVPA (135 aa)) are disordered. At 1–161 (MALEAQPSPS…KRPTAVLQRT (161 aa)) the chain is on the cytoplasmic side. A compositionally biased stretch (gly residues) spans 22–31 (GGAGAPGGSA). Residues 32–44 (GDADAQARRATSG) are compositionally biased toward low complexity. 2 stretches are compositionally biased toward pro residues: residues 54–65 (RRSPPPPFPRTP) and 89–132 (FQPP…PAPR). A helical transmembrane segment spans residues 162 to 182 (ALVARVAAALLCLAALAVLAA). Residues 183 to 203 (DSRKGFALDSYSNYSQLRYSE) are Extracellular-facing. N195 is a glycosylation site (N-linked (GlcNAc...) asparagine). Residues 204–224 (AVNVIGFVYSVLQFFVLADLM) form a helical membrane-spanning segment. At 225-240 (RRNKHLNPRRKGDYFD) the chain is on the cytoplasmic side. The helical transmembrane segment at 241-262 (FFMDQVLAYLLISSSSSATARV) threads the bilayer. Residues 263–280 (GDWIDNWGSDPFPKMANS) are Extracellular-facing. An N-linked (GlcNAc...) asparagine glycan is attached at N279. A helical membrane pass occupies residues 281–301 (SIAISFMAFLVFAISALISAY). Residues 302 to 308 (NLFRRDI) lie on the Cytoplasmic side of the membrane.

The protein belongs to the Casparian strip membrane proteins (CASP) family. In terms of assembly, homodimer and heterodimers.

Its subcellular location is the cell membrane. This is CASP-like protein 4A2 from Oryza sativa subsp. japonica (Rice).